We begin with the raw amino-acid sequence, 382 residues long: Alcohol dehydrogenase 1 (382 aa).

Residues C49, T51, H71, C101, C104, C107, C115, and C179 each coordinate Zn(2+). An alcohol-binding residues include T51 and H71. T51 contacts NAD(+). Residues 204 to 209 (GLGAVG), D228, R233, T275, V298, 298 to 300 (VGV), F325, and R375 contribute to the NAD(+) site.

This sequence belongs to the zinc-containing alcohol dehydrogenase family. As to quaternary structure, homodimer. Requires Zn(2+) as cofactor.

The protein resides in the cytoplasm. It carries out the reaction a primary alcohol + NAD(+) = an aldehyde + NADH + H(+). The catalysed reaction is a secondary alcohol + NAD(+) = a ketone + NADH + H(+). Its function is as follows. This protein is responsible for the conversion of alcohols to aldehydes in plants and is important for NAD metabolism during anaerobic respiration. This is Alcohol dehydrogenase 1 (ADH1) from Petunia hybrida (Petunia).